A 643-amino-acid polypeptide reads, in one-letter code: MKMASQRFCLRWNNHQSNLLSVFDQLLHAETFTDVTLAVEGQHLKAHKMVLSACSPYFNTLFVSHPEKHPIVILKDVPYSDMKSLLDFMYRGEVSVDQERLTAFLRVAESLRIKGLTEVNDDKPSPAAAAAGAGATGSESTATTPQLQRIQPYLVPQRNRSQAGGLLASAANAGNTPTLPVQPSLLSSALMPKRKRGRPRKLSGSSNGTGNDYDDFDRENMMNDSSDLGNGKMCNESYSGNDDGSDDNQPNAGHTDDLNESRDSLPSKRSKNSKDHRVVSHHEDNSTSDGNDSDGEGLDTSYMEPQLMLDEYDEPVEFKYNPLTDNSSPTQDHTDGSHLNEQARQQAFLIAAQRKHQVETAAAAAASGIKLNIIGMAAGGAQVKSMVSIPKLTPIGKVNAASTPLVSPAGSFSTATVKPRVQKRPKLGKQNGDVKPAVFSSQEYLDIYNSNDGFKLKAAGLSGSTPNLSAGLGTPSVKTKLNLSSNVGEGEAEGSVRDYCTKEGEHTYRCKVCSRVYTHISNFCRHYVTSHKRNVKVYPCPFCFKEFTRKDNMTAHVKIIHKIENPSTALATVAAANLAGQPLGVSGASTPPPPDLSGQNSNQSLPATSNALSTSSSSSTSSSSGSLGPLTTSAPPAPAAAAQ.

Residues 33–98 enclose the BTB domain; the sequence is TDVTLAVEGQ…MYRGEVSVDQ (66 aa). 2 disordered regions span residues 118–148 and 171–300; these read EVNDDKPSPAAAAAGAGATGSESTATTPQLQ and ANAG…GLDT. A Glycyl lysine isopeptide (Lys-Gly) (interchain with G-Cter in ubiquitin) cross-link involves residue Lys123. Residues 125-145 are compositionally biased toward low complexity; the sequence is SPAAAAAGAGATGSESTATTP. Residues 176 to 187 are compositionally biased toward polar residues; the sequence is TPTLPVQPSLLS. Residues 192-201 show a composition bias toward basic residues; the sequence is PKRKRGRPRK. Residue Lys201 forms a Glycyl lysine isopeptide (Lys-Gly) (interchain with G-Cter in ubiquitin) linkage. A compositionally biased stretch (basic and acidic residues) spans 254–285; it reads HTDDLNESRDSLPSKRSKNSKDHRVVSHHEDN. Glycyl lysine isopeptide (Lys-Gly) (interchain with G-Cter in ubiquitin) cross-links involve residues Lys355, Lys397, Lys418, Lys457, Lys478, and Lys480. 2 consecutive C2H2-type zinc fingers follow at residues 508 to 531 and 538 to 561; these read YRCKVCSRVYTHISNFCRHYVTSH and YPCPFCFKEFTRKDNMTAHVKIIH. Residue Lys545 forms a Glycyl lysine isopeptide (Lys-Gly) (interchain with G-Cter in ubiquitin) linkage. Residues 584-643 are disordered; that stretch reads GVSGASTPPPPDLSGQNSNQSLPATSNALSTSSSSSTSSSSGSLGPLTTSAPPAPAAAAQ. The segment covering 604–643 has biased composition (low complexity); the sequence is SLPATSNALSTSSSSSTSSSSGSLGPLTTSAPPAPAAAAQ.

In terms of assembly, can form homodimers. Interacts with Trl in vivo via the BTB domain. Interacts with phyl. Interacts with Usp47. Post-translationally, polyubiquitinated by sina. Polyubiquitin linkage is mainly through 'Lys-48', but linkage through 'Lys-63' also occurs. Deubiquitination by Usp47 leads to its stabilization.

The protein localises to the nucleus. Binds to a number of sites in the transcriptional regulatory region of ftz. Isoform beta is required to repress inappropriate segmentation gene transcription and repress genes incompatible with development of photoreceptor cell fates. Probable repressor of the transcription of the segmentation genes ftz, eve, h, odd, run, and en. Inhibits Trl-dependent activation of eve. May bind to the region AGGGC/TGG. Degradation of ttk is directed by binding of sinah or sina, via the adapter molecule phyl which binds to the BTB domain of ttk. A second method of degradation exists that is phyl-independent, this is mediated by recognition of motifs in the C-terminus of ttk. The polypeptide is Protein tramtrack, beta isoform (ttk) (Drosophila melanogaster (Fruit fly)).